The sequence spans 1200 residues: Hyalin (1200 aa).

HYR domains lie at 1–39, 40–123, 124–207, 208–292, 293–376, 377–460, 461–544, 546–629, 630–713, 714–797, 798–881, 882–966, 967–1050, 1051–1133, and 1134–1200; these read SSHNPGQSFTTGTTTTVVYTATDAFANVGQCAFTITVTA, TDTT…NVIE, VDTT…NVIE, VDTT…NVVE, VDTT…TVEE, VDTT…TVIA, VDTT…TISA, VDTT…VINA, VDTT…TIGT, VDTM…TVFA, VDTT…TVTA, QDTT…TVNT, and QDTT…FFSD.

Homooligomer in presence of calcium. Glycosylated.

Its subcellular location is the secreted. The protein localises to the extracellular space. It localises to the extracellular matrix. In terms of biological role, major constituent of the hyaline layer. The hyaline layer of echinoderm embryos is an extraembryonic matrix that functions as a substrate for cell adhesion through early development. In Strongylocentrotus purpuratus (Purple sea urchin), this protein is Hyalin.